The primary structure comprises 684 residues: Hydroxyproline O-galactosyltransferase GALT2 (684 aa).

The Cytoplasmic segment spans residues 1–22 (MKRVKSESFRGVYSSRRFKLSH). A helical; Signal-anchor for type II membrane protein transmembrane segment spans residues 23-43 (FLLAIAGFYLVFLAFKFPHFI). Over 44 to 684 (EMVAMLSGDT…KGRPQCCNFR (641 aa)) the chain is Lumenal. The disordered stretch occupies residues 80 to 102 (KLEDEDHQSGPSTTQKVSPEEKI). N-linked (GlcNAc...) asparagine glycans are attached at residues Asn103, Asn127, and Asn162. The 215-residue stretch at 191–405 (RIMLLPCGLA…DVDIHSIHAT (215 aa)) folds into the Galectin domain. N-linked (GlcNAc...) asparagine glycans are attached at residues Asn524 and Asn632.

The protein belongs to the glycosyltransferase 31 family. Requires Mn(2+) as cofactor. Expressed in stems and at lower levels in cauline leaves and siliques.

It localises to the golgi apparatus membrane. It participates in protein modification; protein glycosylation. In terms of biological role, possesses hydroxyproline O-galactosyltransferase activity. Transfers galactose from UDP-galactose to hydroxyproline residues in the arabinogalactan proteins (AGPs). Is specific for AGPs containing non-contiguous peptidyl hydroxyproline residues. Utilizes UDP-galactose solely as sugar donor. The addition of galactose onto the peptidyl hydroxyproline residues in AGP core proteins represents the first committed step in arabinogalactan polysaccharide addition. AGP glycans play essential roles in both vegetative and reproductive plant growth. This Arabidopsis thaliana (Mouse-ear cress) protein is Hydroxyproline O-galactosyltransferase GALT2.